Here is a 331-residue protein sequence, read N- to C-terminus: Glyceraldehyde-3-phosphate dehydrogenase (331 aa).

NAD(+) is bound by residues 10–11 (RI), Asp31, Lys75, and Thr117. Residues 148–150 (SCT) and Thr179 each bind D-glyceraldehyde 3-phosphate. Cys149 serves as the catalytic Nucleophile. Asn180 is an NAD(+) binding site. D-glyceraldehyde 3-phosphate is bound by residues Arg194, 207–208 (TG), and Arg230. Position 311 (Asn311) interacts with NAD(+).

It belongs to the glyceraldehyde-3-phosphate dehydrogenase family. As to quaternary structure, homotetramer.

It localises to the cytoplasm. It carries out the reaction D-glyceraldehyde 3-phosphate + phosphate + NAD(+) = (2R)-3-phospho-glyceroyl phosphate + NADH + H(+). It participates in carbohydrate degradation; glycolysis; pyruvate from D-glyceraldehyde 3-phosphate: step 1/5. Its function is as follows. Catalyzes the oxidative phosphorylation of glyceraldehyde 3-phosphate (G3P) to 1,3-bisphosphoglycerate (BPG) using the cofactor NAD. The first reaction step involves the formation of a hemiacetal intermediate between G3P and a cysteine residue, and this hemiacetal intermediate is then oxidized to a thioester, with concomitant reduction of NAD to NADH. The reduced NADH is then exchanged with the second NAD, and the thioester is attacked by a nucleophilic inorganic phosphate to produce BPG. The polypeptide is Glyceraldehyde-3-phosphate dehydrogenase (gap) (Thermus aquaticus).